The primary structure comprises 152 residues: Small ribosomal subunit protein uS11B (152 aa).

The disordered stretch occupies residues 131–152; it reads EDVTPIPSDSTRRKGGRRGRRL. Residues 143–152 are compositionally biased toward basic residues; it reads RKGGRRGRRL.

The protein belongs to the universal ribosomal protein uS11 family.

The polypeptide is Small ribosomal subunit protein uS11B (Anopheles gambiae (African malaria mosquito)).